The following is a 932-amino-acid chain: Isoleucine--tRNA ligase (932 aa).

A 'HIGH' region motif is present at residues 57–67; that stretch reads PYANGDIHIGT. E559 lines the L-isoleucyl-5'-AMP pocket. The short motif at 600-604 is the 'KMSKS' region element; the sequence is KMSKS. K603 contacts ATP. Residues C899, C902, C919, and C922 each coordinate Zn(2+).

It belongs to the class-I aminoacyl-tRNA synthetase family. IleS type 1 subfamily. As to quaternary structure, monomer. Zn(2+) is required as a cofactor.

The protein resides in the cytoplasm. It carries out the reaction tRNA(Ile) + L-isoleucine + ATP = L-isoleucyl-tRNA(Ile) + AMP + diphosphate. Functionally, catalyzes the attachment of isoleucine to tRNA(Ile). As IleRS can inadvertently accommodate and process structurally similar amino acids such as valine, to avoid such errors it has two additional distinct tRNA(Ile)-dependent editing activities. One activity is designated as 'pretransfer' editing and involves the hydrolysis of activated Val-AMP. The other activity is designated 'posttransfer' editing and involves deacylation of mischarged Val-tRNA(Ile). The sequence is that of Isoleucine--tRNA ligase from Caldanaerobacter subterraneus subsp. tengcongensis (strain DSM 15242 / JCM 11007 / NBRC 100824 / MB4) (Thermoanaerobacter tengcongensis).